A 332-amino-acid chain; its full sequence is F-box/SPRY domain-containing protein 1 (332 aa).

The span at 1 to 10 shows a compositional bias: acidic residues; it reads MTENNEETIV. The disordered stretch occupies residues 1–81; sequence MTENNEETIV…RRSPRRPEVS (81 aa). Residues 15 to 24 are compositionally biased toward polar residues; it reads CNLTSSTPMK. An F-box domain is found at 79 to 127; it reads EVSASRLPLKVLNQIFQYLSLKDLRSAMLTCHSWNNALSMEDSDIWQQL. Positions 138–330 constitute a B30.2/SPRY domain; that stretch reads SDPFLFVELR…VTMVYVGSPQ (193 aa).

The protein belongs to the FBXO45/Fsn family. As to quaternary structure, component of an SCF (SKP1-CUL1-F-box protein) E3 ubiquitin ligase complex composed of cul-1, fsn-1, rpm-1 and skr-1. Interacts (via SPRY domain) with scd-2 (via cytoplasmic domain). Interacts (via SPRY domain) with convertase egl-3 (via C-terminus).

It localises to the synapse. Its pathway is protein modification; protein ubiquitination. Its function is as follows. Component of a SCF (SKP1-CUL1-F-box protein) E3 ubiquitin ligase complex which is required for the restriction and/or maturation of synapses in GABAergic neuromuscular junction (NMJ) presynaptic neurons. Promotes NRJ synapse development and synaptic transmission by negatively regulating the daf-2/InsR pathway in muscles. By targeting convertase egl-3 for degradation, negatively modulates insulin-like protein ins-4 and ins-6 processing. May stabilize synapse formation by promoting the down-regulation of scd-2. Regulates axon termination in PLM and ALM neurons. This is F-box/SPRY domain-containing protein 1 (fsn-1) from Caenorhabditis briggsae.